The sequence spans 529 residues: Type I restriction enzyme StySJI methylase subunit (529 aa).

Residues 148-153, 178-180, and E216 each bind S-adenosyl-L-methionine; these read QYFTPR and TAG. The disordered stretch occupies residues 405–444; sequence YGEDPHGLSPREEGEWSFNAEESEVADSEENKNTDQHQAT. Positions 407–418 are enriched in basic and acidic residues; that stretch reads EDPHGLSPREEG.

It belongs to the N(4)/N(6)-methyltransferase family. The type I restriction/modification system is composed of three polypeptides R, M and S; the restriction enzyme has stoichiometry R(2)M(2)S(1) while the methyltransferase is M(2)S(1).

It carries out the reaction a 2'-deoxyadenosine in DNA + S-adenosyl-L-methionine = an N(6)-methyl-2'-deoxyadenosine in DNA + S-adenosyl-L-homocysteine + H(+). In terms of biological role, the subtype gamma methyltransferase (M) subunit of a type I restriction enzyme. The M and S subunits together form a methyltransferase (MTase) that methylates two adenine residues of the sequence 5'-GAGN(6)GTRC-3'. In the presence of the R subunit the complex can also act as an endonuclease, binding to the same target sequence but cutting the DNA some distance from this site. Whether the DNA is cut or modified depends on the methylation state of the target sequence. When the target site is unmodified, the DNA is cut. When the target site is hemimethylated, the complex acts as a maintenance MTase modifying the DNA so that both strands become methylated. After locating a non-methylated recognition site, the enzyme complex serves as a molecular motor that translocates DNA in an ATP-dependent manner until a collision occurs that triggers cleavage. The protein is Type I restriction enzyme StySJI methylase subunit of Salmonella typhimurium (strain LT2 / SGSC1412 / ATCC 700720).